A 530-amino-acid chain; its full sequence is MHFAIILLFLLVIIAIVYTYVDLIDVHHEEVRYPITVFDNTRAPLIEPPSEIVIEGNAHECHKTLTPCFTHGDCDLCREGLANCQLFDEDTIVKMRGDDGQEHETLIRAGEAYCLALDRERARSCNPNTGVWLLAETETGFALLCNCLRPGLVTQLNMYEDCNVPVGCAPHGRIDNINSASIRCVCDDGYVSDYNADTETPYCRPRTVRDVMYDESFFPRAPCADGQVRLDHPALNDFYRRHFRLEDICVIDPCSVDPISGQRTSGRLFHQPTVNGVGINGCNCPADDGLLPVFNRHTADTGMVRQSDRTVANACLQPFNVHMLSLRHVDYKFFWGRSDHTEFADADMVFQANVNQLSHERYRAILYSLLESHPDVTEIVTVNMGVMKISVSYDTTLKNILLPSSVFRLFRFKESGTAQPVCFFPGVGRCITVNSDSCIRRHAGGQVWTAETFTNSWCVLSREGTHIKVWSRASRYPRGDAPAALRLRGFFLNNDRERNTIRAVTTGDMTQGQQIDALTQILETYPNYSV.

An N-terminal signal peptide occupies residues 1 to 15 (MHFAIILLFLLVIIA).

In terms of assembly, forms the PIF complex together with PIF2 and PIF3. The complex also interacts with per os infectivity factor PIF0.

The protein localises to the virion membrane. Functionally, per os infectivity factor that mediates the specific binding of occluded virions (ODV) to the host midgut target cells. The sequence is that of Per os infectivity factor 1 from Autographa californica nuclear polyhedrosis virus (AcMNPV).